Here is a 208-residue protein sequence, read N- to C-terminus: N-(5'-phosphoribosyl)anthranilate isomerase (208 aa).

It belongs to the TrpF family.

The enzyme catalyses N-(5-phospho-beta-D-ribosyl)anthranilate = 1-(2-carboxyphenylamino)-1-deoxy-D-ribulose 5-phosphate. It functions in the pathway amino-acid biosynthesis; L-tryptophan biosynthesis; L-tryptophan from chorismate: step 3/5. The chain is N-(5'-phosphoribosyl)anthranilate isomerase from Chlamydia trachomatis serovar L2 (strain ATCC VR-902B / DSM 19102 / 434/Bu).